The following is a 319-amino-acid chain: Acetylglutamate kinase (319 aa).

Residues 74–75 (GG), Arg96, and Asn210 each bind substrate.

It belongs to the acetylglutamate kinase family. ArgB subfamily.

Its subcellular location is the cytoplasm. The catalysed reaction is N-acetyl-L-glutamate + ATP = N-acetyl-L-glutamyl 5-phosphate + ADP. It participates in amino-acid biosynthesis; L-arginine biosynthesis; N(2)-acetyl-L-ornithine from L-glutamate: step 2/4. Catalyzes the ATP-dependent phosphorylation of N-acetyl-L-glutamate. This is Acetylglutamate kinase from Pseudarthrobacter chlorophenolicus (strain ATCC 700700 / DSM 12829 / CIP 107037 / JCM 12360 / KCTC 9906 / NCIMB 13794 / A6) (Arthrobacter chlorophenolicus).